The sequence spans 194 residues: ATP-dependent Clp protease proteolytic subunit (194 aa).

Catalysis depends on S98, which acts as the Nucleophile. The active site involves H123.

Belongs to the peptidase S14 family. Fourteen ClpP subunits assemble into 2 heptameric rings which stack back to back to give a disk-like structure with a central cavity, resembling the structure of eukaryotic proteasomes.

It is found in the cytoplasm. The catalysed reaction is Hydrolysis of proteins to small peptides in the presence of ATP and magnesium. alpha-casein is the usual test substrate. In the absence of ATP, only oligopeptides shorter than five residues are hydrolyzed (such as succinyl-Leu-Tyr-|-NHMec, and Leu-Tyr-Leu-|-Tyr-Trp, in which cleavage of the -Tyr-|-Leu- and -Tyr-|-Trp bonds also occurs).. Cleaves peptides in various proteins in a process that requires ATP hydrolysis. Has a chymotrypsin-like activity. Plays a major role in the degradation of misfolded proteins. The polypeptide is ATP-dependent Clp protease proteolytic subunit (Clostridium botulinum (strain Loch Maree / Type A3)).